A 184-amino-acid polypeptide reads, in one-letter code: Large ribosomal subunit protein uL6 (184 aa).

It belongs to the universal ribosomal protein uL6 family. As to quaternary structure, part of the 50S ribosomal subunit.

Its function is as follows. This protein binds to the 23S rRNA, and is important in its secondary structure. It is located near the subunit interface in the base of the L7/L12 stalk, and near the tRNA binding site of the peptidyltransferase center. This is Large ribosomal subunit protein uL6 from Thermotoga neapolitana (strain ATCC 49049 / DSM 4359 / NBRC 107923 / NS-E).